The following is a 347-amino-acid chain: 4-hydroxy-3-methylbut-2-en-1-yl diphosphate synthase (flavodoxin) (347 aa).

[4Fe-4S] cluster is bound by residues Cys259, Cys262, Cys294, and Glu301.

The protein belongs to the IspG family. [4Fe-4S] cluster is required as a cofactor.

The catalysed reaction is (2E)-4-hydroxy-3-methylbut-2-enyl diphosphate + oxidized [flavodoxin] + H2O + 2 H(+) = 2-C-methyl-D-erythritol 2,4-cyclic diphosphate + reduced [flavodoxin]. It functions in the pathway isoprenoid biosynthesis; isopentenyl diphosphate biosynthesis via DXP pathway; isopentenyl diphosphate from 1-deoxy-D-xylulose 5-phosphate: step 5/6. Its function is as follows. Converts 2C-methyl-D-erythritol 2,4-cyclodiphosphate (ME-2,4cPP) into 1-hydroxy-2-methyl-2-(E)-butenyl 4-diphosphate. The protein is 4-hydroxy-3-methylbut-2-en-1-yl diphosphate synthase (flavodoxin) of Caldicellulosiruptor saccharolyticus (strain ATCC 43494 / DSM 8903 / Tp8T 6331).